A 446-amino-acid chain; its full sequence is Divalent metal cation transporter MntH (446 aa).

11 consecutive transmembrane segments (helical) span residues 32–52 (FSFLGPGLLVAVGYMDPGNWI), 59–79 (AQFGYILLFVILLSSLSAMLL), 107–127 (AFVFWIIAELAIIATDIAEVI), 139–159 (IPLLVGALITVFDVFLLLFIM), 168–188 (AIVGTLIFTVLVIFVFEVFIA), 210–230 (GALFIALGIIGATIMPHNLYL), 264–284 (SIAFIVNCLLLVLGAALFFGV), 303–323 (PLLGASLGAIMSTLFAIALLA), 355–375 (LITRLIAILPIIICLIVFNSN), 381–401 (QLLVFSQVFLSLALPFSLIPL), and 420–440 (VNIISWCLIIILSILNIYLII).

This sequence belongs to the NRAMP family.

It is found in the cell membrane. Its function is as follows. H(+)-stimulated, divalent metal cation uptake system. This chain is Divalent metal cation transporter MntH, found in Staphylococcus saprophyticus subsp. saprophyticus (strain ATCC 15305 / DSM 20229 / NCIMB 8711 / NCTC 7292 / S-41).